Here is a 485-residue protein sequence, read N- to C-terminus: Glutamate--tRNA ligase (485 aa).

Residues 11–21 (PSPTGHLHIGN) carry the 'HIGH' region motif. Positions 252 to 256 (KLSKR) match the 'KMSKS' region motif. An ATP-binding site is contributed by lysine 255.

The protein belongs to the class-I aminoacyl-tRNA synthetase family. Glutamate--tRNA ligase type 1 subfamily. In terms of assembly, monomer.

It localises to the cytoplasm. It catalyses the reaction tRNA(Glu) + L-glutamate + ATP = L-glutamyl-tRNA(Glu) + AMP + diphosphate. In terms of biological role, catalyzes the attachment of glutamate to tRNA(Glu) in a two-step reaction: glutamate is first activated by ATP to form Glu-AMP and then transferred to the acceptor end of tRNA(Glu). In Bacillus cereus (strain ATCC 10987 / NRS 248), this protein is Glutamate--tRNA ligase.